The primary structure comprises 591 residues: Aspartate--tRNA(Asp/Asn) ligase (591 aa).

L-aspartate is bound at residue Glu175. Positions 199–202 are aspartate; that stretch reads QQFK. L-aspartate-binding residues include Arg221 and His453. Residue 221 to 223 participates in ATP binding; that stretch reads RDE. Position 486 (Glu486) interacts with ATP. Arg493 is a binding site for L-aspartate. An ATP-binding site is contributed by 538–541; that stretch reads GIDR.

This sequence belongs to the class-II aminoacyl-tRNA synthetase family. Type 1 subfamily. In terms of assembly, homodimer.

Its subcellular location is the cytoplasm. It carries out the reaction tRNA(Asx) + L-aspartate + ATP = L-aspartyl-tRNA(Asx) + AMP + diphosphate. In terms of biological role, aspartyl-tRNA synthetase with relaxed tRNA specificity since it is able to aspartylate not only its cognate tRNA(Asp) but also tRNA(Asn). Reaction proceeds in two steps: L-aspartate is first activated by ATP to form Asp-AMP and then transferred to the acceptor end of tRNA(Asp/Asn). The sequence is that of Aspartate--tRNA(Asp/Asn) ligase from Cereibacter sphaeroides (strain ATCC 17025 / ATH 2.4.3) (Rhodobacter sphaeroides).